We begin with the raw amino-acid sequence, 242 residues long: tRNA pseudouridine synthase A (242 aa).

Aspartate 51 functions as the Nucleophile in the catalytic mechanism. Tyrosine 107 is a substrate binding site.

The protein belongs to the tRNA pseudouridine synthase TruA family. Homodimer.

It catalyses the reaction uridine(38/39/40) in tRNA = pseudouridine(38/39/40) in tRNA. Functionally, formation of pseudouridine at positions 38, 39 and 40 in the anticodon stem and loop of transfer RNAs. This chain is tRNA pseudouridine synthase A, found in Helicobacter pylori (strain J99 / ATCC 700824) (Campylobacter pylori J99).